Here is a 362-residue protein sequence, read N- to C-terminus: tRNA-specific 2-thiouridylase MnmA 1 (362 aa).

ATP is bound by residues 29–36 and methionine 55; that span reads AMSGGVDS. Residue cysteine 109 is the Nucleophile of the active site. Cysteine 109 and cysteine 201 are joined by a disulfide. Residue glycine 133 coordinates ATP. The interaction with tRNA stretch occupies residues 151–153; it reads KDQ. Catalysis depends on cysteine 201, which acts as the Cysteine persulfide intermediate.

The protein belongs to the MnmA/TRMU family.

The protein resides in the cytoplasm. It catalyses the reaction S-sulfanyl-L-cysteinyl-[protein] + uridine(34) in tRNA + AH2 + ATP = 2-thiouridine(34) in tRNA + L-cysteinyl-[protein] + A + AMP + diphosphate + H(+). In terms of biological role, catalyzes the 2-thiolation of uridine at the wobble position (U34) of tRNA, leading to the formation of s(2)U34. In Fusobacterium nucleatum subsp. nucleatum (strain ATCC 25586 / DSM 15643 / BCRC 10681 / CIP 101130 / JCM 8532 / KCTC 2640 / LMG 13131 / VPI 4355), this protein is tRNA-specific 2-thiouridylase MnmA 1.